Consider the following 504-residue polypeptide: Glycerol kinase (504 aa).

An ADP-binding site is contributed by Thr12. ATP is bound by residues Thr12, Thr13, and Ser14. A sn-glycerol 3-phosphate-binding site is contributed by Thr12. Arg16 is a binding site for ADP. Sn-glycerol 3-phosphate is bound by residues Arg82, Glu83, Tyr134, and Asp246. Arg82, Glu83, Tyr134, Asp246, and Gln247 together coordinate glycerol. Positions 268 and 312 each coordinate ADP. 4 residues coordinate ATP: Thr268, Gly312, Gln316, and Gly413. Residues Gly413 and Asn417 each contribute to the ADP site.

It belongs to the FGGY kinase family.

The enzyme catalyses glycerol + ATP = sn-glycerol 3-phosphate + ADP + H(+). It functions in the pathway polyol metabolism; glycerol degradation via glycerol kinase pathway; sn-glycerol 3-phosphate from glycerol: step 1/1. Inhibited by fructose 1,6-bisphosphate (FBP). In terms of biological role, key enzyme in the regulation of glycerol uptake and metabolism. Catalyzes the phosphorylation of glycerol to yield sn-glycerol 3-phosphate. This Paenarthrobacter aurescens (strain TC1) protein is Glycerol kinase.